A 469-amino-acid chain; its full sequence is 3-isopropylmalate dehydratase large subunit (469 aa).

Positions 347, 407, and 410 each coordinate [4Fe-4S] cluster.

The protein belongs to the aconitase/IPM isomerase family. LeuC type 1 subfamily. Heterodimer of LeuC and LeuD. Requires [4Fe-4S] cluster as cofactor.

It catalyses the reaction (2R,3S)-3-isopropylmalate = (2S)-2-isopropylmalate. It participates in amino-acid biosynthesis; L-leucine biosynthesis; L-leucine from 3-methyl-2-oxobutanoate: step 2/4. Functionally, catalyzes the isomerization between 2-isopropylmalate and 3-isopropylmalate, via the formation of 2-isopropylmaleate. In Prochlorococcus marinus (strain NATL1A), this protein is 3-isopropylmalate dehydratase large subunit.